Consider the following 188-residue polypeptide: NADH-quinone oxidoreductase subunit I 2 (188 aa).

2 consecutive 4Fe-4S ferredoxin-type domains span residues 56-88 and 98-127; these read HFLKRDDEGEIKCVACELCARICPCDCIEVVPY and AKFEIDTARCLFCGLCEDACPADAIALGQQ. Residues cysteine 68, cysteine 71, cysteine 74, cysteine 78, cysteine 107, cysteine 110, cysteine 113, and cysteine 117 each coordinate [4Fe-4S] cluster.

This sequence belongs to the complex I 23 kDa subunit family. NDH-1 is composed of 14 different subunits. Subunits NuoA, H, J, K, L, M, N constitute the membrane sector of the complex. It depends on [4Fe-4S] cluster as a cofactor.

Its subcellular location is the cell inner membrane. The enzyme catalyses a quinone + NADH + 5 H(+)(in) = a quinol + NAD(+) + 4 H(+)(out). In terms of biological role, NDH-1 shuttles electrons from NADH, via FMN and iron-sulfur (Fe-S) centers, to quinones in the respiratory chain. The immediate electron acceptor for the enzyme in this species is believed to be ubiquinone. Couples the redox reaction to proton translocation (for every two electrons transferred, four hydrogen ions are translocated across the cytoplasmic membrane), and thus conserves the redox energy in a proton gradient. The protein is NADH-quinone oxidoreductase subunit I 2 of Rhizobium meliloti (strain 1021) (Ensifer meliloti).